We begin with the raw amino-acid sequence, 273 residues long: Outer capsid protein VP7 (273 aa).

Belongs to the aquareoviridae outer capsid VP7 protein family. In terms of assembly, interacts with VP4 and VP6.

It localises to the virion. Functionally, interacts with VP4 to form the outer icosahedral capsid with an incomplete T=13 symmetry, about 80 nm in diameter, and consisting of 200 VP4-VP7 trimers. The polypeptide is Outer capsid protein VP7 (S10) (Ctenopharyngodon idella (Grass carp)).